The following is a 326-amino-acid chain: GTP cyclohydrolase MptA (326 aa).

The protein belongs to the GTP cyclohydrolase IV family. In terms of assembly, homodimer. Requires Fe(2+) as cofactor.

The catalysed reaction is GTP + H2O = 7,8-dihydroneopterin 2',3'-cyclic phosphate + formate + diphosphate + H(+). Its pathway is cofactor biosynthesis; 5,6,7,8-tetrahydromethanopterin biosynthesis. Converts GTP to 7,8-dihydro-D-neopterin 2',3'-cyclic phosphate, the first intermediate in the biosynthesis of coenzyme methanopterin. This Methanoregula boonei (strain DSM 21154 / JCM 14090 / 6A8) protein is GTP cyclohydrolase MptA.